Here is a 197-residue protein sequence, read N- to C-terminus: dITP/XTP pyrophosphatase (197 aa).

Residue threonine 10 to lysine 15 coordinates substrate. Aspartate 70 acts as the Proton acceptor in catalysis. Residue aspartate 70 participates in Mg(2+) binding. Residues serine 71, phenylalanine 151–aspartate 154, lysine 173, and histidine 178–arginine 179 each bind substrate.

This sequence belongs to the HAM1 NTPase family. As to quaternary structure, homodimer. Mg(2+) is required as a cofactor.

It carries out the reaction XTP + H2O = XMP + diphosphate + H(+). The catalysed reaction is dITP + H2O = dIMP + diphosphate + H(+). The enzyme catalyses ITP + H2O = IMP + diphosphate + H(+). Pyrophosphatase that catalyzes the hydrolysis of nucleoside triphosphates to their monophosphate derivatives, with a high preference for the non-canonical purine nucleotides XTP (xanthosine triphosphate), dITP (deoxyinosine triphosphate) and ITP. Seems to function as a house-cleaning enzyme that removes non-canonical purine nucleotides from the nucleotide pool, thus preventing their incorporation into DNA/RNA and avoiding chromosomal lesions. In Symbiobacterium thermophilum (strain DSM 24528 / JCM 14929 / IAM 14863 / T), this protein is dITP/XTP pyrophosphatase.